A 100-amino-acid chain; its full sequence is Putative sodium channel toxin Ts26 (100 aa).

Residues 1 to 22 form the signal peptide; the sequence is MVKSAMKIVILILFVLLIRVES. Positions 24–92 constitute an LCN-type CS-alpha/beta domain; it reads RNGYPDISDG…VMDTTIEYCE (69 aa). Cystine bridges form between Cys-38-Cys-64, Cys-50-Cys-69, Cys-54-Cys-71, and Cys-65-Cys-91.

The protein belongs to the long (4 C-C) scorpion toxin superfamily. Sodium channel inhibitor family. In terms of tissue distribution, expressed by the venom gland.

Its subcellular location is the secreted. Functionally, putative sodium channel toxin. The polypeptide is Putative sodium channel toxin Ts26 (Tityus serrulatus (Brazilian scorpion)).